A 292-amino-acid chain; its full sequence is Phosphatidylglycerol--prolipoprotein diacylglyceryl transferase (292 aa).

The next 7 membrane-spanning stretches (helical) occupy residues 25–45 (ITLHWYGLGYVVGILFAWWYA), 70–90 (FVVWSAISVVVGGRLGQVLVW), 102–122 (IIAVWDGGMSFHGGLIGIIIA), 138–158 (FDIIAAGAPIGIGIVRICNFI), 193–213 (FMEGFILFMILFIVIFTFKAF), 217–237 (GTVSGIFIIGYAIARSISEVY), and 255–275 (GFTYGMALSLPMLLLGFYLLL). R153 lines the a 1,2-diacyl-sn-glycero-3-phospho-(1'-sn-glycerol) pocket.

This sequence belongs to the Lgt family.

It localises to the cell inner membrane. The enzyme catalyses L-cysteinyl-[prolipoprotein] + a 1,2-diacyl-sn-glycero-3-phospho-(1'-sn-glycerol) = an S-1,2-diacyl-sn-glyceryl-L-cysteinyl-[prolipoprotein] + sn-glycerol 1-phosphate + H(+). Its pathway is protein modification; lipoprotein biosynthesis (diacylglyceryl transfer). Its function is as follows. Catalyzes the transfer of the diacylglyceryl group from phosphatidylglycerol to the sulfhydryl group of the N-terminal cysteine of a prolipoprotein, the first step in the formation of mature lipoproteins. The protein is Phosphatidylglycerol--prolipoprotein diacylglyceryl transferase of Bartonella tribocorum (strain CIP 105476 / IBS 506).